A 320-amino-acid chain; its full sequence is Lipoyl synthase (320 aa).

Positions 67, 72, 78, 93, 97, 100, and 307 each coordinate [4Fe-4S] cluster. In terms of domain architecture, Radical SAM core spans 79-296 (FNHGTATFMI…RDKANEMGFE (218 aa)).

The protein belongs to the radical SAM superfamily. Lipoyl synthase family. [4Fe-4S] cluster serves as cofactor.

Its subcellular location is the cytoplasm. It catalyses the reaction [[Fe-S] cluster scaffold protein carrying a second [4Fe-4S](2+) cluster] + N(6)-octanoyl-L-lysyl-[protein] + 2 oxidized [2Fe-2S]-[ferredoxin] + 2 S-adenosyl-L-methionine + 4 H(+) = [[Fe-S] cluster scaffold protein] + N(6)-[(R)-dihydrolipoyl]-L-lysyl-[protein] + 4 Fe(3+) + 2 hydrogen sulfide + 2 5'-deoxyadenosine + 2 L-methionine + 2 reduced [2Fe-2S]-[ferredoxin]. The protein operates within protein modification; protein lipoylation via endogenous pathway; protein N(6)-(lipoyl)lysine from octanoyl-[acyl-carrier-protein]: step 2/2. Catalyzes the radical-mediated insertion of two sulfur atoms into the C-6 and C-8 positions of the octanoyl moiety bound to the lipoyl domains of lipoate-dependent enzymes, thereby converting the octanoylated domains into lipoylated derivatives. This Haemophilus influenzae (strain PittEE) protein is Lipoyl synthase.